The following is a 150-amino-acid chain: MASYRLLLLCLAGLVFVSEAGPAGAGESKCPLMVKVLDAVRGSPAVNVGVKVFKKAADGTWEPFALGKTSEFGELHGLTTDEKFVEGIYKVELDTKSYWKALGISPFHEYAEVVFTANDSGRRHYTIAALLSPYSYSTTALVSSPKEGAL.

Positions M1–A20 are cleaved as a signal peptide. C30 is modified (sulfocysteine). Residue K35 participates in L-thyroxine binding. A 4-carboxyglutamate modification is found at E62. Residue E74 participates in L-thyroxine binding. N-linked (GlcNAc...) asparagine glycosylation is present at N118. Position 137 (S137) interacts with L-thyroxine.

Belongs to the transthyretin family. In terms of assembly, homotetramer. Dimer of dimers. In the homotetramer, subunits assemble around a central channel that can accommodate two ligand molecules. Interacts with RBP4. Post-translationally, sulfonation of the reactive cysteine Cys-30 enhances the stability of the native conformation of TTR, avoiding misassembly of the protein leading to amyloid formation. As to expression, detected in plasma and cerebrospinal fluid (at protein level). Highly expressed in the choroid plexus. Detected in liver.

The protein localises to the secreted. Its function is as follows. Thyroid hormone-binding protein. Probably transports thyroxine from the bloodstream to the brain. The protein is Transthyretin (TTR) of Sus scrofa (Pig).